Consider the following 200-residue polypeptide: Large ribosomal subunit protein bL25 (200 aa).

Positions 1 to 20 are disordered; it reads MEARELKANVRKESGKEQAR.

This sequence belongs to the bacterial ribosomal protein bL25 family. CTC subfamily. Part of the 50S ribosomal subunit; part of the 5S rRNA/L5/L18/L25 subcomplex. Contacts the 5S rRNA. Binds to the 5S rRNA independently of L5 and L18.

In terms of biological role, this is one of the proteins that binds to the 5S RNA in the ribosome where it forms part of the central protuberance. This is Large ribosomal subunit protein bL25 from Syntrophus aciditrophicus (strain SB).